A 465-amino-acid polypeptide reads, in one-letter code: Ribulose bisphosphate carboxylase large chain (465 aa).

The residue at position 4 (lysine 4) is an N6,N6,N6-trimethyllysine. Residues asparagine 113 and threonine 163 each contribute to the substrate site. The active-site Proton acceptor is the lysine 165. Substrate is bound at residue lysine 167. Mg(2+)-binding residues include lysine 191, aspartate 193, and glutamate 194. The residue at position 191 (lysine 191) is an N6-carboxylysine. Catalysis depends on histidine 284, which acts as the Proton acceptor. Residues arginine 285, histidine 317, and serine 369 each coordinate substrate.

The protein belongs to the RuBisCO large chain family. Type I subfamily. Heterohexadecamer of 8 large chains and 8 small chains; disulfide-linked. The disulfide link is formed within the large subunit homodimers. It depends on Mg(2+) as a cofactor. In terms of processing, the disulfide bond which can form in the large chain dimeric partners within the hexadecamer appears to be associated with oxidative stress and protein turnover.

The protein localises to the plastid. The protein resides in the chloroplast. It carries out the reaction 2 (2R)-3-phosphoglycerate + 2 H(+) = D-ribulose 1,5-bisphosphate + CO2 + H2O. The enzyme catalyses D-ribulose 1,5-bisphosphate + O2 = 2-phosphoglycolate + (2R)-3-phosphoglycerate + 2 H(+). Functionally, ruBisCO catalyzes two reactions: the carboxylation of D-ribulose 1,5-bisphosphate, the primary event in carbon dioxide fixation, as well as the oxidative fragmentation of the pentose substrate in the photorespiration process. Both reactions occur simultaneously and in competition at the same active site. The polypeptide is Ribulose bisphosphate carboxylase large chain (Manilkara zapota (Sapodilla plum)).